The following is a 391-amino-acid chain: Probable sugar efflux transporter (391 aa).

12 consecutive transmembrane segments (helical) span residues 16-36, 51-71, 82-102, 103-123, 138-158, 170-190, 210-230, 247-267, 277-297, 300-320, 338-358, and 361-381; these read VFVF…PIAL, VGLM…PLML, LLFL…AWDF, WVLL…WSIT, QALG…LPLG, TFGM…RLLP, PLLV…FTTY, VATL…FLFG, FIAC…SFKH, WVIF…GISL, IFSG…SIVI, and LGLG…LFWF.

It belongs to the major facilitator superfamily. SotB (TC 2.A.1.2) family.

It localises to the cell inner membrane. Involved in the efflux of sugars. The physiological role may be the reduction of the intracellular concentration of toxic sugars or sugar metabolites. This is Probable sugar efflux transporter from Helicobacter acinonychis (strain Sheeba).